A 48-amino-acid chain; its full sequence is 2-deoxy-glucose resistant protein 1, mitochondrial (48 aa).

The N-terminal 28 residues, 1–28, are a transit peptide targeting the mitochondrion; that stretch reads MQVGFVSQTNCRSFPACIVFLFQMSQRQ.

It localises to the mitochondrion. The protein is 2-deoxy-glucose resistant protein 1, mitochondrial (DGR1) of Saccharomyces cerevisiae (strain ATCC 204508 / S288c) (Baker's yeast).